We begin with the raw amino-acid sequence, 56 residues long: Large ribosomal subunit protein bL32 (56 aa).

A compositionally biased stretch (basic residues) spans 1–16 (MAVQKNKKSRSKRGMR). A disordered region spans residues 1 to 36 (MAVQKNKKSRSKRGMRRSHDSLSTPQLSVDSTSGEL). A compositionally biased stretch (polar residues) spans 21 to 34 (SLSTPQLSVDSTSG).

The protein belongs to the bacterial ribosomal protein bL32 family.

The polypeptide is Large ribosomal subunit protein bL32 (Shewanella sediminis (strain HAW-EB3)).